We begin with the raw amino-acid sequence, 501 residues long: Cell division control protein 24 (501 aa).

Interacts with dna2, pcn1 and rfc1.

The protein localises to the nucleus. It localises to the cytoplasm. Functionally, has a role in the progression of DNA replication and in the maintenance of genomic integrity. Acts during S phase, after initiation, where it is essential for completion. This Schizosaccharomyces pombe (strain 972 / ATCC 24843) (Fission yeast) protein is Cell division control protein 24 (cdc24).